The primary structure comprises 298 residues: Esterase Rv0045c (298 aa).

Residue S122 is the Nucleophile of the active site. Active-site residues include D146 and H277.

Belongs to the AB hydrolase superfamily. In terms of assembly, monomer.

The catalysed reaction is a carboxylic ester + H2O = an alcohol + a carboxylate + H(+). It carries out the reaction a butanoate ester + H2O = an aliphatic alcohol + butanoate + H(+). It catalyses the reaction an acetyl ester + H2O = an aliphatic alcohol + acetate + H(+). The enzyme catalyses a hexanoate ester + H2O = an aliphatic alcohol + hexanoate + H(+). The catalysed reaction is a tetradecanoate ester + H2O = an aliphatic alcohol + tetradecanoate + H(+). Hydrolysis of a fluorogenic ester substrate (MOAME) is allosterically inhibited by divalent transition metal cations (Cu(2+), Zn(2+), Ni(2+) and Co(2+)). Inhibition is largely due to a two order of magnitude drop in kcat, with relatively little change in KM. The thermal stability decreases with increasing concentrations of Ni(2+). Esterase likely involved in ester/lipid metabolism. Shows strong substrate selectivity toward short, straight chain alkyl esters with the highest activity toward four atom chains. The physiological substrate is unknown. Is able to hydrolyze ester bonds within a wide range of p-nitrophenyl derivatives (C2-C14) in vitro. This is Esterase Rv0045c from Mycobacterium tuberculosis (strain ATCC 25618 / H37Rv).